Reading from the N-terminus, the 122-residue chain is UPF0382 membrane protein SAB0533 (122 aa).

The next 4 helical transmembrane spans lie at 3–23, 46–66, 69–89, and 98–118; these read LFIILGALNAMMAVGTGAFGA, MYHGLALLIIGVISGTTSINV, AGWLIFAGIIFFSGSLYILVL, and ITPIGGVLFIIGWIMLIIATF.

The protein belongs to the UPF0382 family.

The protein localises to the cell membrane. This chain is UPF0382 membrane protein SAB0533, found in Staphylococcus aureus (strain bovine RF122 / ET3-1).